The primary structure comprises 303 residues: D-alanine--D-alanine ligase (303 aa).

The ATP-grasp domain occupies 100–295 (KQLLRRHGIL…FPALIARLIE (196 aa)). 127 to 180 (GLGYPLFVKPNTGGSSLCLSRVTQPEGLAPALEAVFAHCGEAIVEPAIPGVEVT) provides a ligand contact to ATP. Mg(2+) is bound by residues Asp-249, Glu-262, and Asn-264.

Belongs to the D-alanine--D-alanine ligase family. The cofactor is Mg(2+). Mn(2+) is required as a cofactor.

The protein localises to the cytoplasm. The catalysed reaction is 2 D-alanine + ATP = D-alanyl-D-alanine + ADP + phosphate + H(+). Its pathway is cell wall biogenesis; peptidoglycan biosynthesis. In terms of biological role, cell wall formation. This Nitratidesulfovibrio vulgaris (strain ATCC 29579 / DSM 644 / CCUG 34227 / NCIMB 8303 / VKM B-1760 / Hildenborough) (Desulfovibrio vulgaris) protein is D-alanine--D-alanine ligase.